A 288-amino-acid polypeptide reads, in one-letter code: Pantothenate synthetase (288 aa).

An ATP-binding site is contributed by 30–37 (MGNLHAGH). Residue His37 is the Proton donor of the active site. Residue Gln61 coordinates (R)-pantoate. Beta-alanine is bound at residue Gln61. Position 149–152 (149–152 (GLKD)) interacts with ATP. (R)-pantoate is bound at residue Gln155. ATP is bound by residues Ile178 and 186–189 (LSSR).

This sequence belongs to the pantothenate synthetase family. Homodimer.

The protein resides in the cytoplasm. The enzyme catalyses (R)-pantoate + beta-alanine + ATP = (R)-pantothenate + AMP + diphosphate + H(+). It functions in the pathway cofactor biosynthesis; (R)-pantothenate biosynthesis; (R)-pantothenate from (R)-pantoate and beta-alanine: step 1/1. Functionally, catalyzes the condensation of pantoate with beta-alanine in an ATP-dependent reaction via a pantoyl-adenylate intermediate. This is Pantothenate synthetase from Colwellia psychrerythraea (strain 34H / ATCC BAA-681) (Vibrio psychroerythus).